Here is a 256-residue protein sequence, read N- to C-terminus: uncharacterized protein (256 aa).

The stretch at 213–243 forms a coiled coil; that stretch reads TMSMEAKLEAAKKTLEKFKQEAASKRAKRTK. Residues 231-256 form a disordered region; that stretch reads KQEAASKRAKRTKPSGSKTTRSTGRK. The segment covering 244–256 has biased composition (polar residues); the sequence is PSGSKTTRSTGRK.

This is an uncharacterized protein from Acanthamoeba polyphaga (Amoeba).